We begin with the raw amino-acid sequence, 105 residues long: MMAKIVSGDDVIVIAGSDKGKIGKVVKILRKGGHVVAKVAGVALCRKSVKPSKDREGGIFSVERFIDISNIALFDSEAGVRTKVGYKFVDGKKVRYLKGSGRVLD.

Belongs to the universal ribosomal protein uL24 family. As to quaternary structure, part of the 50S ribosomal subunit.

Functionally, one of two assembly initiator proteins, it binds directly to the 5'-end of the 23S rRNA, where it nucleates assembly of the 50S subunit. In terms of biological role, one of the proteins that surrounds the polypeptide exit tunnel on the outside of the subunit. The chain is Large ribosomal subunit protein uL24 from Anaplasma marginale (strain St. Maries).